A 30-amino-acid polypeptide reads, in one-letter code: Cyclotide hypa-A (30 aa).

Residues 1–30 constitute a cross-link (cyclopeptide (Gly-Asn)); the sequence is GIPCAESCVYIPCTITALLGCSCKNKVCYN. Disulfide bonds link C4/C21, C8/C23, and C13/C28.

Post-translationally, this is a cyclic peptide.

Functionally, probably participates in a plant defense mechanism. This chain is Cyclotide hypa-A, found in Pombalia parviflora (Violetilla).